We begin with the raw amino-acid sequence, 276 residues long: Pantothenate synthetase (276 aa).

Residue 25 to 32 (MGYLHRGH) participates in ATP binding. The active-site Proton donor is His32. Gln56 lines the (R)-pantoate pocket. Gln56 is a binding site for beta-alanine. 143-146 (GEKD) serves as a coordination point for ATP. Position 149 (Gln149) interacts with (R)-pantoate. Residues Val172 and 180-183 (LSSR) contribute to the ATP site.

The protein belongs to the pantothenate synthetase family. As to quaternary structure, homodimer.

It is found in the cytoplasm. It catalyses the reaction (R)-pantoate + beta-alanine + ATP = (R)-pantothenate + AMP + diphosphate + H(+). Its pathway is cofactor biosynthesis; (R)-pantothenate biosynthesis; (R)-pantothenate from (R)-pantoate and beta-alanine: step 1/1. Its function is as follows. Catalyzes the condensation of pantoate with beta-alanine in an ATP-dependent reaction via a pantoyl-adenylate intermediate. The polypeptide is Pantothenate synthetase (Thermus thermophilus (strain ATCC BAA-163 / DSM 7039 / HB27)).